A 212-amino-acid polypeptide reads, in one-letter code: Thiamine-phosphate synthase (212 aa).

Residues 43–47 (QYRNK) and Asn75 each bind 4-amino-2-methyl-5-(diphosphooxymethyl)pyrimidine. Residues Asp76 and Asp95 each contribute to the Mg(2+) site. Position 114 (Ser114) interacts with 4-amino-2-methyl-5-(diphosphooxymethyl)pyrimidine. Residue 141–143 (SMT) participates in 2-[(2R,5Z)-2-carboxy-4-methylthiazol-5(2H)-ylidene]ethyl phosphate binding. A 4-amino-2-methyl-5-(diphosphooxymethyl)pyrimidine-binding site is contributed by Lys144. Gly171 contacts 2-[(2R,5Z)-2-carboxy-4-methylthiazol-5(2H)-ylidene]ethyl phosphate.

This sequence belongs to the thiamine-phosphate synthase family. Mg(2+) is required as a cofactor.

It carries out the reaction 2-[(2R,5Z)-2-carboxy-4-methylthiazol-5(2H)-ylidene]ethyl phosphate + 4-amino-2-methyl-5-(diphosphooxymethyl)pyrimidine + 2 H(+) = thiamine phosphate + CO2 + diphosphate. It catalyses the reaction 2-(2-carboxy-4-methylthiazol-5-yl)ethyl phosphate + 4-amino-2-methyl-5-(diphosphooxymethyl)pyrimidine + 2 H(+) = thiamine phosphate + CO2 + diphosphate. The catalysed reaction is 4-methyl-5-(2-phosphooxyethyl)-thiazole + 4-amino-2-methyl-5-(diphosphooxymethyl)pyrimidine + H(+) = thiamine phosphate + diphosphate. It participates in cofactor biosynthesis; thiamine diphosphate biosynthesis; thiamine phosphate from 4-amino-2-methyl-5-diphosphomethylpyrimidine and 4-methyl-5-(2-phosphoethyl)-thiazole: step 1/1. Condenses 4-methyl-5-(beta-hydroxyethyl)thiazole monophosphate (THZ-P) and 2-methyl-4-amino-5-hydroxymethyl pyrimidine pyrophosphate (HMP-PP) to form thiamine monophosphate (TMP). This chain is Thiamine-phosphate synthase, found in Nitrosomonas eutropha (strain DSM 101675 / C91 / Nm57).